Here is a 253-residue protein sequence, read N- to C-terminus: Zinc finger protein JAGGED (253 aa).

Residues 1-46 are disordered; the sequence is MRHEENYLDLNNLPDDFSKDGNKQALEEGSSSGQRKKKGSKEGKDE. The span at 16–26 shows a compositional bias: basic and acidic residues; sequence DFSKDGNKQAL. The segment at 51–73 adopts a C2H2-type zinc-finger fold; the sequence is YECRFCSLKFCKSQALGGHMNRH.

Interacts with GATA18/HAN. In terms of tissue distribution, expressed in the emerging leaf, sepal, petal, stamen and carpel primordia. Not expressed in the apical shoot meristem (SAM).

The protein localises to the nucleus. In terms of biological role, controls the morphogenesis of lateral organs. Functions in lateral organ shape and is sufficient to induce proliferation and growth of lateral organ tissue. Is necessary and sufficient for bract formation, but its expression is excluded from the cryptic bract, which could be a cause of bractless flowers in Arabidopsis. Participates with FIL and YAB3 in regulating valve margin development. Functions with JGL to define stamen and carpel shape. Functions with AS1 and AS2 in the sepal and petal primordia to repress boundary-specifying genes for normal development of the organs. This is Zinc finger protein JAGGED (JAG) from Arabidopsis thaliana (Mouse-ear cress).